Consider the following 423-residue polypeptide: uncharacterized protein (423 aa).

It belongs to the asfivirus E423R family.

The protein localises to the virion. This is an uncharacterized protein from African swine fever virus (isolate Tick/Malawi/Lil 20-1/1983) (ASFV).